We begin with the raw amino-acid sequence, 214 residues long: MSNQKNNIPRATLKRLPLYYRLVNQLHEKGIDRVNSKTISEALDIDSASIRRDFSYFGELGKKGYGYNVESLLEFFKSKISESDTIKIGLVGVGNLGKALLSYNFSIHDEMVITEAFDIRDDIVGTKVGKVIVNKMEDLQSILKSAELDVVILTTPGSAAQEAADQIVDSGVKGILNFTPTRINVPDDVSVHQIDLGIELQSLLFFMNNLRNSN.

The H-T-H motif DNA-binding region spans 18–57; the sequence is LYYRLVNQLHEKGIDRVNSKTISEALDIDSASIRRDFSYF. 92–97 serves as a coordination point for NAD(+); sequence GVGNLG.

Belongs to the transcriptional regulatory Rex family. As to quaternary structure, homodimer.

It is found in the cytoplasm. Its function is as follows. Modulates transcription in response to changes in cellular NADH/NAD(+) redox state. This chain is Redox-sensing transcriptional repressor Rex, found in Staphylococcus carnosus (strain TM300).